A 379-amino-acid polypeptide reads, in one-letter code: Oxidoreductase chry3 (379 aa).

Disordered regions lie at residues 1–23 (MTTA…QPTP) and 126–150 (EGDD…TSHM). Residues 126-138 (EGDDSAPAEEEAD) show a composition bias toward acidic residues.

The protein belongs to the asaB hydroxylase/desaturase family.

It functions in the pathway pigment biosynthesis. Functionally, oxidoreductase; part of the gene cluster that mediates the biosynthesis of the yellow pigment chrysogine. Pyruvic acid and anthranilic acid are likely substrates for the nonribosomal peptide synthetase chry1/NRPS14, with pyruvic acid adenylated by the first A domain and anthranilic acid by the second. If pyruvic acid and anthranilic acid are merged and released from chry1/NRPS14 by hydrolysis, a subsequent amidation would lead to 2-pyruvoylaminobenzamide. This process is probably catalyzed by the amidotransferase chry2 using glutamine as amino donor. The dehydrogenase chry5 that has a terminal berberine bridge domain for C-N cyclization could catalyze the cyclization of 2-pyruvoylaminobenzamide to yield acetyl-4(3H)-quinazolidinone. A final reduction of acetyl-4(3H)-quinazolidinone catalyzed by the oxidoreductase chry4 would result in chrysogine. This is Oxidoreductase chry3 from Gibberella zeae (strain ATCC MYA-4620 / CBS 123657 / FGSC 9075 / NRRL 31084 / PH-1) (Wheat head blight fungus).